The primary structure comprises 433 residues: MSSPSRSVSLFERAQKTIPGGVNSPVRAFRSVGGTPRFIAKAAGPYLWDADGTRLIDYVGSWGPMIVGHAHPEVVRAVQQVAADSFSFGAPTEAEVVMAETLCELVPSIEQVRLVSSGTEATMSALRLARGFTGRDLIVKFEGCYHGHADSLLVKAGSGLLTFADTTQNAPSSAGVPEDVVKHTMVLPYNDADALREAFARHGKEIAAVIVEPVAGNMNLVRATAAFLQAMRALCTEHGAVLIFDEVMTGFRVALGCAQALYGITPDLTCLGKVIGGGMPAAAFGGRRDIMGFLAPLGSVYQAGTLSGNPLAVAAGVTTLRLIAADGFHDRLAAQTRKLVDGLAGIARDAGVPFAADSVGGMFGLYFREGVPTSFAEVTQSDVGRFNAFFHAMLAEGVYLAPSAFEAGFVSSMHDDAVLEATFEAARRAFKAV.

The residue at position 273 (Lys-273) is an N6-(pyridoxal phosphate)lysine.

Belongs to the class-III pyridoxal-phosphate-dependent aminotransferase family. HemL subfamily. As to quaternary structure, homodimer. It depends on pyridoxal 5'-phosphate as a cofactor.

The protein resides in the cytoplasm. It catalyses the reaction (S)-4-amino-5-oxopentanoate = 5-aminolevulinate. Its pathway is porphyrin-containing compound metabolism; protoporphyrin-IX biosynthesis; 5-aminolevulinate from L-glutamyl-tRNA(Glu): step 2/2. In Ralstonia nicotianae (strain ATCC BAA-1114 / GMI1000) (Ralstonia solanacearum), this protein is Glutamate-1-semialdehyde 2,1-aminomutase.